The primary structure comprises 435 residues: Serine--tRNA ligase (435 aa).

242-244 is a binding site for L-serine; the sequence is TAE. Residue 273–275 coordinates ATP; the sequence is RSE. An L-serine-binding site is contributed by Glu-296. Residue 360–363 participates in ATP binding; it reads EISS. Residue Ser-396 participates in L-serine binding.

The protein belongs to the class-II aminoacyl-tRNA synthetase family. Type-1 seryl-tRNA synthetase subfamily. Homodimer. The tRNA molecule binds across the dimer.

The protein localises to the cytoplasm. The enzyme catalyses tRNA(Ser) + L-serine + ATP = L-seryl-tRNA(Ser) + AMP + diphosphate + H(+). It catalyses the reaction tRNA(Sec) + L-serine + ATP = L-seryl-tRNA(Sec) + AMP + diphosphate + H(+). It functions in the pathway aminoacyl-tRNA biosynthesis; selenocysteinyl-tRNA(Sec) biosynthesis; L-seryl-tRNA(Sec) from L-serine and tRNA(Sec): step 1/1. Functionally, catalyzes the attachment of serine to tRNA(Ser). Is also able to aminoacylate tRNA(Sec) with serine, to form the misacylated tRNA L-seryl-tRNA(Sec), which will be further converted into selenocysteinyl-tRNA(Sec). The protein is Serine--tRNA ligase of Vibrio cholerae serotype O1 (strain ATCC 39541 / Classical Ogawa 395 / O395).